The following is a 284-amino-acid chain: Formamidopyrimidine-DNA glycosylase (284 aa).

The Schiff-base intermediate with DNA role is filled by proline 2. The active-site Proton donor is the glutamate 3. Residue lysine 60 is the Proton donor; for beta-elimination activity of the active site. Positions 99, 118, and 163 each coordinate DNA. The FPG-type zinc finger occupies 248–282 (WVYGRQGQPCRTCGQTIERIKLVGRSTHFCPQCQP). Arginine 272 functions as the Proton donor; for delta-elimination activity in the catalytic mechanism.

This sequence belongs to the FPG family. Monomer. Zn(2+) is required as a cofactor.

The enzyme catalyses Hydrolysis of DNA containing ring-opened 7-methylguanine residues, releasing 2,6-diamino-4-hydroxy-5-(N-methyl)formamidopyrimidine.. The catalysed reaction is 2'-deoxyribonucleotide-(2'-deoxyribose 5'-phosphate)-2'-deoxyribonucleotide-DNA = a 3'-end 2'-deoxyribonucleotide-(2,3-dehydro-2,3-deoxyribose 5'-phosphate)-DNA + a 5'-end 5'-phospho-2'-deoxyribonucleoside-DNA + H(+). In terms of biological role, involved in base excision repair of DNA damaged by oxidation or by mutagenic agents. Acts as a DNA glycosylase that recognizes and removes damaged bases. Has a preference for oxidized purines, such as 7,8-dihydro-8-oxoguanine (8-oxoG). Has AP (apurinic/apyrimidinic) lyase activity and introduces nicks in the DNA strand. Cleaves the DNA backbone by beta-delta elimination to generate a single-strand break at the site of the removed base with both 3'- and 5'-phosphates. The polypeptide is Formamidopyrimidine-DNA glycosylase (Acaryochloris marina (strain MBIC 11017)).